A 127-amino-acid chain; its full sequence is Large-conductance mechanosensitive channel (127 aa).

3 helical membrane-spanning segments follow: residues 9–29 (EFAM…GVAF), 32–52 (IVTA…LGGV), and 75–95 (VIDF…INLL).

The protein belongs to the MscL family. In terms of assembly, homopentamer.

It is found in the cell inner membrane. Functionally, channel that opens in response to stretch forces in the membrane lipid bilayer. May participate in the regulation of osmotic pressure changes within the cell. In Legionella pneumophila (strain Lens), this protein is Large-conductance mechanosensitive channel.